The primary structure comprises 265 residues: Glutamate racemase (265 aa).

Substrate contacts are provided by residues 9–10 and 41–42; these read DS and YG. C72 serves as the catalytic Proton donor/acceptor. Residue 73–74 participates in substrate binding; it reads NT. Residue C183 is the Proton donor/acceptor of the active site. A substrate-binding site is contributed by 184-185; that stretch reads TH.

This sequence belongs to the aspartate/glutamate racemases family.

It carries out the reaction L-glutamate = D-glutamate. The protein operates within cell wall biogenesis; peptidoglycan biosynthesis. Provides the (R)-glutamate required for cell wall biosynthesis. The sequence is that of Glutamate racemase from Lysinibacillus sphaericus (strain C3-41).